An 885-amino-acid polypeptide reads, in one-letter code: Leucine--tRNA ligase (885 aa).

Positions 53–63 (PYPSGKLHMGH) match the 'HIGH' region motif. A 'KMSKS' region motif is present at residues 631–635 (KMSKS). K634 is an ATP binding site.

It belongs to the class-I aminoacyl-tRNA synthetase family.

The protein localises to the cytoplasm. The enzyme catalyses tRNA(Leu) + L-leucine + ATP = L-leucyl-tRNA(Leu) + AMP + diphosphate. The sequence is that of Leucine--tRNA ligase from Psychrobacter sp. (strain PRwf-1).